The chain runs to 732 residues: Catalase-peroxidase (732 aa).

The interval 1 to 23 (MSEQSKCPVTGRTAGHPVAGGGM) is disordered. A cross-link (tryptophyl-tyrosyl-methioninium (Trp-Tyr) (with M-246)) is located at residues 97-220 (WHSAGTYRTS…LAAVQMGLIY (124 aa)). The active-site Proton acceptor is His98. Positions 220–246 (YVNPEGPDGNPDPVAAGRDIRETFARM) form a cross-link, tryptophyl-tyrosyl-methioninium (Tyr-Met) (with W-97). A heme b-binding site is contributed by His261.

The protein belongs to the peroxidase family. Peroxidase/catalase subfamily. In terms of assembly, homodimer or homotetramer. Requires heme b as cofactor. In terms of processing, formation of the three residue Trp-Tyr-Met cross-link is important for the catalase, but not the peroxidase activity of the enzyme.

The enzyme catalyses H2O2 + AH2 = A + 2 H2O. The catalysed reaction is 2 H2O2 = O2 + 2 H2O. In terms of biological role, bifunctional enzyme with both catalase and broad-spectrum peroxidase activity. The polypeptide is Catalase-peroxidase (Chlorobium limicola (strain DSM 245 / NBRC 103803 / 6330)).